An 806-amino-acid chain; its full sequence is Phenylalanine--tRNA ligase beta subunit (806 aa).

Positions 40-155 constitute a tRNA-binding domain; sequence NKGVKGVVVG…SDAEVGADAL (116 aa). Residues 409–484 enclose the B5 domain; sequence VQERTVSVTA…RLYGYDHIPV (76 aa). Mg(2+) contacts are provided by Asp462, Asp468, Glu471, and Glu472. The region spanning 712–805 is the FDX-ACB domain; the sequence is PRFPSMTRDM…VEEKFGAELR (94 aa).

This sequence belongs to the phenylalanyl-tRNA synthetase beta subunit family. Type 1 subfamily. In terms of assembly, tetramer of two alpha and two beta subunits. Mg(2+) is required as a cofactor.

Its subcellular location is the cytoplasm. The catalysed reaction is tRNA(Phe) + L-phenylalanine + ATP = L-phenylalanyl-tRNA(Phe) + AMP + diphosphate + H(+). The protein is Phenylalanine--tRNA ligase beta subunit of Bacillus thuringiensis subsp. konkukian (strain 97-27).